We begin with the raw amino-acid sequence, 341 residues long: MAP3K12-binding inhibitory protein 1 (341 aa).

Ser-91 carries the phosphoserine modification. Residues Lys-94, Lys-127, Lys-137, Lys-151, and Lys-233 each participate in a glycyl lysine isopeptide (Lys-Gly) (interchain with G-Cter in SUMO2) cross-link. The interaction with MAP3K12 stretch occupies residues 170-341 (AEINENNVRE…EADSMAAHLP (172 aa)). The leucine-zipper 1 stretch occupies residues 269–283 (IYQRIKKLEDKILEL). At Lys-299 the chain carries N6-acetyllysine; alternate. A Glycyl lysine isopeptide (Lys-Gly) (interchain with G-Cter in SUMO2); alternate cross-link involves residue Lys-299. Glycyl lysine isopeptide (Lys-Gly) (interchain with G-Cter in SUMO2) cross-links involve residues Lys-302 and Lys-323. The segment at 312–327 (LAELDEKISALKRALL) is leucine-zipper 2.

As to quaternary structure, component of the ADA2A-containing complex (ATAC), composed of KAT14, KAT2A, TADA2L, TADA3L, ZZ3, MBIP, WDR5, YEATS2, CCDC101 and DR1. In the complex, it probably interacts directly with KAT2A, KAT14 and WDR5.

The protein localises to the nucleus. It localises to the cytoplasm. Its function is as follows. Inhibits the MAP3K12 activity to induce the activation of the JNK/SAPK pathway. Component of the ATAC complex, a complex with histone acetyltransferase activity on histones H3 and H4. This Mus musculus (Mouse) protein is MAP3K12-binding inhibitory protein 1 (Mbip).